A 130-amino-acid chain; its full sequence is Small ribosomal subunit protein uS11 (130 aa).

It belongs to the universal ribosomal protein uS11 family. In terms of assembly, part of the 30S ribosomal subunit. Interacts with proteins S7 and S18. Binds to IF-3.

Its function is as follows. Located on the platform of the 30S subunit, it bridges several disparate RNA helices of the 16S rRNA. Forms part of the Shine-Dalgarno cleft in the 70S ribosome. The chain is Small ribosomal subunit protein uS11 from Buchnera aphidicola subsp. Cinara cedri (strain Cc).